Here is a 121-residue protein sequence, read N- to C-terminus: Large ribosomal subunit protein uL18 (121 aa).

This sequence belongs to the universal ribosomal protein uL18 family. In terms of assembly, part of the 50S ribosomal subunit; part of the 5S rRNA/L5/L18/L25 subcomplex. Contacts the 5S and 23S rRNAs.

Functionally, this is one of the proteins that bind and probably mediate the attachment of the 5S RNA into the large ribosomal subunit, where it forms part of the central protuberance. The protein is Large ribosomal subunit protein uL18 of Paraburkholderia xenovorans (strain LB400).